Consider the following 666-residue polypeptide: Probable cytochrome c oxidase subunit 1 (666 aa).

2 helical membrane passes run 16-36 and 57-77; these read IPLI…VWVV and IGVM…SDAI. Heme b is bound at residue histidine 105. A run of 13 helical transmembrane segments spans residues 108-128, 142-162, 192-212, 234-254, 277-297, 315-335, 346-366, 380-400, 413-433, 456-476, 493-513, 591-611, and 612-632; these read IMIF…VVPL, SVGF…LVIG, SLQI…TTVL, SNLL…MLLL, LIWA…FGIF, MVLA…HHFF, IFGI…YNWL, MLWA…GVLV, MFLV…GAFA, FWFT…AGML, WMLV…CQIM, SPTG…LIWH, and IWWM…VFAW. Cu cation-binding residues include histidine 283, tyrosine 287, histidine 332, and histidine 333. The 1'-histidyl-3'-tyrosine (His-Tyr) cross-link spans 283–287; the sequence is HPEVY. Histidine 418 and histidine 420 together coordinate heme b.

This sequence belongs to the heme-copper respiratory oxidase family.

It is found in the cell membrane. The catalysed reaction is 4 Fe(II)-[cytochrome c] + O2 + 8 H(+)(in) = 4 Fe(III)-[cytochrome c] + 2 H2O + 4 H(+)(out). The protein operates within energy metabolism; oxidative phosphorylation. The sequence is that of Probable cytochrome c oxidase subunit 1 from Bradyrhizobium diazoefficiens (strain JCM 10833 / BCRC 13528 / IAM 13628 / NBRC 14792 / USDA 110).